The following is a 631-amino-acid chain: Translation factor GUF1, mitochondrial (631 aa).

Residues 1-19 (MFNRRLLRHVRYAFQQVRS) constitute a mitochondrion transit peptide. In terms of domain architecture, tr-type G spans 33–214 (ERYRNFSIVA…AIVDRIPPPT (182 aa)). GTP-binding positions include 42–49 (AHVDHGKS), 107–111 (DTPGH), and 161–164 (NKID).

Belongs to the TRAFAC class translation factor GTPase superfamily. Classic translation factor GTPase family. LepA subfamily.

The protein resides in the mitochondrion inner membrane. The catalysed reaction is GTP + H2O = GDP + phosphate + H(+). Functionally, promotes mitochondrial protein synthesis. May act as a fidelity factor of the translation reaction, by catalyzing a one-codon backward translocation of tRNAs on improperly translocated ribosomes. Binds to mitochondrial ribosomes in a GTP-dependent manner. The protein is Translation factor GUF1, mitochondrial of Kluyveromyces lactis (strain ATCC 8585 / CBS 2359 / DSM 70799 / NBRC 1267 / NRRL Y-1140 / WM37) (Yeast).